The primary structure comprises 662 residues: Pollen receptor-like kinase 1 (662 aa).

An N-terminal signal peptide occupies residues 1–31; the sequence is MPPMQARTLSVYNVMVPLVCLLLFFSTPTHG. At 32-256 the chain is on the extracellular side; it reads LSDSEAILKF…ARPKSSSRGP (225 aa). 6 LRR repeats span residues 79–98, 99–121, 122–144, 147–169, 171–191, and 192–214; these read QMEN…SGLT, SLRT…KKLA, ALKS…AFEG, WLKK…VAKL, KLLE…EFEH, and QLHL…LSMT. Asn197 carries N-linked (GlcNAc...) asparagine glycosylation. The disordered stretch occupies residues 233 to 253; sequence ECDSPYIEHPPQSEARPKSSS. The helical transmembrane segment at 257–277 threads the bilayer; that stretch reads LVITAIVAALTILIILGVIFL. Over 278–662 the chain is Cytoplasmic; the sequence is LNRSYKNKKP…GESCESISFA (385 aa). Residues 288–330 form a disordered region; sequence RLAVETGPSSLQKKTGIREADQSRRDRKKADHRKGSGTTKRMG. The 283-residue stretch at 357-639 folds into the Protein kinase domain; that stretch reads KASAEILGSG…EREGDDDDFY (283 aa). Residue Ser359 is modified to Phosphoserine. Residues 363-371 and Lys385 contribute to the ATP site; that span reads LGSGCFGAS. A Phosphoserine modification is found at Ser437. A Phosphothreonine modification is found at Thr457. The residue at position 527 (Tyr527) is a Phosphotyrosine. The interval 636–662 is disordered; it reads DDFYSTYVSETDGRSSKGESCESISFA. Residues 646–655 show a composition bias toward basic and acidic residues; that stretch reads TDGRSSKGES.

Belongs to the protein kinase superfamily. Ser/Thr protein kinase family. In terms of assembly, interacts in vitro with ROPGEF1 (via PRONE domain). As to expression, expressed in pollen and/or in flowers, but not in leaves.

It is found in the cell membrane. The catalysed reaction is L-seryl-[protein] + ATP = O-phospho-L-seryl-[protein] + ADP + H(+). It carries out the reaction L-threonyl-[protein] + ATP = O-phospho-L-threonyl-[protein] + ADP + H(+). In terms of biological role, receptor-like kinase involved in the control of pollen germination and pollen tube polar growth. This Arabidopsis thaliana (Mouse-ear cress) protein is Pollen receptor-like kinase 1.